Here is a 436-residue protein sequence, read N- to C-terminus: Arginine biosynthesis bifunctional protein ArgJ, mitochondrial (436 aa).

Substrate contacts are provided by T172, K198, T209, E298, N431, and S436. T209 serves as the catalytic Nucleophile.

Belongs to the ArgJ family. Heterodimer of an alpha and a beta chain. The alpha and beta chains are autoproteolytically processed from a single precursor protein within the mitochondrion.

The protein resides in the mitochondrion matrix. It carries out the reaction N(2)-acetyl-L-ornithine + L-glutamate = N-acetyl-L-glutamate + L-ornithine. The enzyme catalyses L-glutamate + acetyl-CoA = N-acetyl-L-glutamate + CoA + H(+). Its pathway is amino-acid biosynthesis; L-arginine biosynthesis; L-ornithine and N-acetyl-L-glutamate from L-glutamate and N(2)-acetyl-L-ornithine (cyclic): step 1/1. It functions in the pathway amino-acid biosynthesis; L-arginine biosynthesis; N(2)-acetyl-L-ornithine from L-glutamate: step 1/4. In terms of biological role, catalyzes two activities which are involved in the cyclic version of arginine biosynthesis: the synthesis of acetylglutamate from glutamate and acetyl-CoA, and of ornithine by transacetylation between acetylornithine and glutamate. In Meyerozyma guilliermondii (strain ATCC 6260 / CBS 566 / DSM 6381 / JCM 1539 / NBRC 10279 / NRRL Y-324) (Yeast), this protein is Arginine biosynthesis bifunctional protein ArgJ, mitochondrial.